The primary structure comprises 344 residues: MRIEALNTAPDATEARFEEQIRPQKMGDFAGQKKLIDNLKVFITAARKRGEALDHVLLSGPPGLGKTTLAHIIAAEMGGSIKITSGPLIDKAGNLAGLLTSMKKGDILFIDEIHRLAPAVEEYLYSAMEDYRIDILLDSGPASRAVQLKLEPFTLVGATTRAGLLTSPLRARFGINSRLDYYNPELLQSIIIRAAGILNIGIDEDAAMEIARRSRGTPRIANRLLRRARDFAQVAGDASISLAVARRTLESLEIDEGGLDDMDKKILEAIVRKFNGGPVGLASLAVSVGEEQDTIEEVYEPYLIQMGYLSRTPRGRVATRLAMSRFAHPGISSQGSLFDTAEDG.

The segment at 1–182 is large ATPase domain (RuvB-L); it reads MRIEALNTAP…FGINSRLDYY (182 aa). ATP-binding positions include Ile21, Arg22, Gly63, Lys66, Thr67, Thr68, 129–131, Arg172, Tyr182, and Arg219; that span reads EDY. Position 67 (Thr67) interacts with Mg(2+). Positions 183 to 253 are small ATPAse domain (RuvB-S); sequence NPELLQSIII…VARRTLESLE (71 aa). The head domain (RuvB-H) stretch occupies residues 256-344; it reads EGGLDDMDKK…GSLFDTAEDG (89 aa). Positions 311 and 316 each coordinate DNA.

This sequence belongs to the RuvB family. Homohexamer. Forms an RuvA(8)-RuvB(12)-Holliday junction (HJ) complex. HJ DNA is sandwiched between 2 RuvA tetramers; dsDNA enters through RuvA and exits via RuvB. An RuvB hexamer assembles on each DNA strand where it exits the tetramer. Each RuvB hexamer is contacted by two RuvA subunits (via domain III) on 2 adjacent RuvB subunits; this complex drives branch migration. In the full resolvosome a probable DNA-RuvA(4)-RuvB(12)-RuvC(2) complex forms which resolves the HJ.

Its subcellular location is the cytoplasm. The enzyme catalyses ATP + H2O = ADP + phosphate + H(+). Its function is as follows. The RuvA-RuvB-RuvC complex processes Holliday junction (HJ) DNA during genetic recombination and DNA repair, while the RuvA-RuvB complex plays an important role in the rescue of blocked DNA replication forks via replication fork reversal (RFR). RuvA specifically binds to HJ cruciform DNA, conferring on it an open structure. The RuvB hexamer acts as an ATP-dependent pump, pulling dsDNA into and through the RuvAB complex. RuvB forms 2 homohexamers on either side of HJ DNA bound by 1 or 2 RuvA tetramers; 4 subunits per hexamer contact DNA at a time. Coordinated motions by a converter formed by DNA-disengaged RuvB subunits stimulates ATP hydrolysis and nucleotide exchange. Immobilization of the converter enables RuvB to convert the ATP-contained energy into a lever motion, pulling 2 nucleotides of DNA out of the RuvA tetramer per ATP hydrolyzed, thus driving DNA branch migration. The RuvB motors rotate together with the DNA substrate, which together with the progressing nucleotide cycle form the mechanistic basis for DNA recombination by continuous HJ branch migration. Branch migration allows RuvC to scan DNA until it finds its consensus sequence, where it cleaves and resolves cruciform DNA. The protein is Holliday junction branch migration complex subunit RuvB of Chlorobaculum tepidum (strain ATCC 49652 / DSM 12025 / NBRC 103806 / TLS) (Chlorobium tepidum).